The primary structure comprises 235 residues: Probable Ni/Fe-hydrogenase 1 B-type cytochrome subunit (235 aa).

Residues 1-19 (MQQKSDNVVSHYVFEAPVR) lie on the Cytoplasmic side of the membrane. Residues 20–40 (IWHWLTVLCMAVLMVTGYFIG) form a helical membrane-spanning segment. Topologically, residues 41 to 63 (KPLPSVSGEATYLFYMGYIRLIH) are periplasmic. A helical transmembrane segment spans residues 64–84 (FSAGMVFTVVLLMRIYWAFVG). Residues 85–130 (NRYSRELFIVPVWRKSWWQGVWYEIRWYLFLAKRPSADIGHNPIAQ) are Cytoplasmic-facing. A helical transmembrane segment spans residues 131–151 (AAMFGYFLMSVFMIITGFALY). The Periplasmic segment spans residues 152-185 (SEHSQYAIFAPFRYVVEFFYWTGGNSMDIHSWHR). A helical transmembrane segment spans residues 186–203 (LGMWLIGAFVIGHVYMAL). Residues 204–235 (REDIMSDDTVISTMVNGYRSHKFGKISNKERS) are Cytoplasmic-facing.

It belongs to the HupC/HyaC/HydC family.

It is found in the cell inner membrane. Functionally, probable b-type cytochrome. The protein is Probable Ni/Fe-hydrogenase 1 B-type cytochrome subunit (hyaC) of Escherichia coli O157:H7.